A 31-amino-acid chain; its full sequence is Cyclotide vibi-H (31 aa).

A cross-link (cyclopeptide (Gly-Asn)) is located at residues 1 to 31 (GLLPCAESCVYIPCLTTVIGCSCKSKVCYKN). Disulfide bonds link cysteine 5–cysteine 21, cysteine 9–cysteine 23, and cysteine 14–cysteine 28.

This is a cyclic peptide.

Functionally, probably participates in a plant defense mechanism. Has cytotoxic activity, active against a human lymphoma cell line with an IC(50) of 1.6 uM. The sequence is that of Cyclotide vibi-H from Viola biflora (Yellow wood violet).